Consider the following 363-residue polypeptide: Probable methyltransferase-like protein 24 (363 aa).

Residues 1 to 38 form the signal peptide; it reads MGTAKPPGRGCGALPRWLLGAALLLGLRLCMELRHAGS. The disordered stretch occupies residues 37-62; sequence GSGPPGRRDLRGPPRTHLLPAPGPLR.

Belongs to the methyltransferase superfamily.

The protein resides in the secreted. Its function is as follows. Probable methyltransferase. The polypeptide is Probable methyltransferase-like protein 24 (Mettl24) (Rattus norvegicus (Rat)).